A 620-amino-acid polypeptide reads, in one-letter code: Translation initiation factor IF-2 (620 aa).

A tr-type G domain is found at 126–295; that stretch reads KRPPIVTIMG…IVTAEIMELK (170 aa). Residues 135–142 are G1; that stretch reads GHVDHGKT. Position 135–142 (135–142) interacts with GTP; sequence GHVDHGKT. A G2 region spans residues 160-164; the sequence is NITQS. Positions 181-184 are G3; that stretch reads DTPG. GTP is bound by residues 181–185 and 235–238; these read DTPGH and NKMD. The G4 stretch occupies residues 235-238; the sequence is NKMD. The G5 stretch occupies residues 271-273; the sequence is SAL.

Belongs to the TRAFAC class translation factor GTPase superfamily. Classic translation factor GTPase family. IF-2 subfamily.

It is found in the cytoplasm. One of the essential components for the initiation of protein synthesis. Protects formylmethionyl-tRNA from spontaneous hydrolysis and promotes its binding to the 30S ribosomal subunits. Also involved in the hydrolysis of GTP during the formation of the 70S ribosomal complex. In Malacoplasma penetrans (strain HF-2) (Mycoplasma penetrans), this protein is Translation initiation factor IF-2.